Reading from the N-terminus, the 254-residue chain is Pimeloyl-[acyl-carrier protein] methyl ester esterase (254 aa).

One can recognise an AB hydrolase-1 domain in the interval 16-242; it reads LVLIHGWGMN…ASHAPFISHP (227 aa). Substrate-binding positions include tryptophan 22, 82–83, and 143–147; these read SL and FLALQ. The active-site Nucleophile is the serine 82. Residues aspartate 207 and histidine 235 contribute to the active site. Histidine 235 is a substrate binding site.

This sequence belongs to the AB hydrolase superfamily. Carboxylesterase BioH family. As to quaternary structure, monomer.

The protein localises to the cytoplasm. It carries out the reaction 6-carboxyhexanoyl-[ACP] methyl ester + H2O = 6-carboxyhexanoyl-[ACP] + methanol + H(+). The protein operates within cofactor biosynthesis; biotin biosynthesis. Its function is as follows. The physiological role of BioH is to remove the methyl group introduced by BioC when the pimeloyl moiety is complete. It allows to synthesize pimeloyl-ACP via the fatty acid synthetic pathway through the hydrolysis of the ester bonds of pimeloyl-ACP esters. This chain is Pimeloyl-[acyl-carrier protein] methyl ester esterase, found in Photobacterium profundum (strain SS9).